A 257-amino-acid polypeptide reads, in one-letter code: Imidazole glycerol phosphate synthase subunit HisF (257 aa).

Residues D11 and D130 contribute to the active site.

This sequence belongs to the HisA/HisF family. In terms of assembly, heterodimer of HisH and HisF.

It localises to the cytoplasm. It carries out the reaction 5-[(5-phospho-1-deoxy-D-ribulos-1-ylimino)methylamino]-1-(5-phospho-beta-D-ribosyl)imidazole-4-carboxamide + L-glutamine = D-erythro-1-(imidazol-4-yl)glycerol 3-phosphate + 5-amino-1-(5-phospho-beta-D-ribosyl)imidazole-4-carboxamide + L-glutamate + H(+). It participates in amino-acid biosynthesis; L-histidine biosynthesis; L-histidine from 5-phospho-alpha-D-ribose 1-diphosphate: step 5/9. Its function is as follows. IGPS catalyzes the conversion of PRFAR and glutamine to IGP, AICAR and glutamate. The HisF subunit catalyzes the cyclization activity that produces IGP and AICAR from PRFAR using the ammonia provided by the HisH subunit. The polypeptide is Imidazole glycerol phosphate synthase subunit HisF (Aeromonas salmonicida (strain A449)).